The chain runs to 284 residues: RNase adapter protein RapZ (284 aa).

Position 8-15 (8-15 (GRSGSGKS)) interacts with ATP. Residue 56–59 (DVRN) participates in GTP binding. An RNA-binding region spans residues 266 to 284 (RSRGKNVQSRHRTLEKRKQ).

Belongs to the RapZ-like family. RapZ subfamily. As to quaternary structure, homotrimer.

In terms of biological role, modulates the synthesis of GlmS, by affecting the processing and stability of the regulatory small RNA GlmZ. When glucosamine-6-phosphate (GlcN6P) concentrations are high in the cell, RapZ binds GlmZ and targets it to cleavage by RNase E. Consequently, GlmZ is inactivated and unable to activate GlmS synthesis. Under low GlcN6P concentrations, RapZ is sequestered and inactivated by an other regulatory small RNA, GlmY, preventing GlmZ degradation and leading to synthesis of GlmS. This chain is RNase adapter protein RapZ, found in Serratia proteamaculans (strain 568).